Here is a 374-residue protein sequence, read N- to C-terminus: Large ribosomal subunit protein bL27m (374 aa).

The N-terminal 41 residues, 1-41 (MLRLSGVKSAVRARAAAGAAFSVSLSGPQAVSLLALPLVRH), are a transit peptide targeting the mitochondrion.

Belongs to the bacterial ribosomal protein bL27 family.

It localises to the mitochondrion. Its function is as follows. Component of the large subunit of mitochondrial ribosome. The polypeptide is Large ribosomal subunit protein bL27m (MRPL2) (Yarrowia lipolytica (strain CLIB 122 / E 150) (Yeast)).